Reading from the N-terminus, the 362-residue chain is Spermidine/putrescine import ATP-binding protein PotA (362 aa).

In terms of domain architecture, ABC transporter spans 6–237; that stretch reads ISFKHVVKSY…PINHYVADFI (232 aa). 39-46 provides a ligand contact to ATP; that stretch reads GPSGCGKT.

The protein belongs to the ABC transporter superfamily. Spermidine/putrescine importer (TC 3.A.1.11.1) family. The complex is composed of two ATP-binding proteins (PotA), two transmembrane proteins (PotB and PotC) and a solute-binding protein (PotD).

It localises to the cell membrane. The enzyme catalyses ATP + H2O + polyamine-[polyamine-binding protein]Side 1 = ADP + phosphate + polyamineSide 2 + [polyamine-binding protein]Side 1.. Its function is as follows. Part of the ABC transporter complex PotABCD involved in spermidine/putrescine import. Responsible for energy coupling to the transport system. The polypeptide is Spermidine/putrescine import ATP-binding protein PotA (Ligilactobacillus salivarius (strain UCC118) (Lactobacillus salivarius)).